The following is a 386-amino-acid chain: Succinate--CoA ligase [ADP-forming] subunit beta (386 aa).

The region spanning 9–244 (KEILRKYGVS…LDEEDPKEIE (236 aa)) is the ATP-grasp domain. Residues lysine 46, 53–55 (GRG), glutamate 99, cysteine 102, and glutamate 107 contribute to the ATP site. Asparagine 199 and aspartate 213 together coordinate Mg(2+). Substrate-binding positions include asparagine 264 and 321–323 (GIM).

It belongs to the succinate/malate CoA ligase beta subunit family. As to quaternary structure, heterotetramer of two alpha and two beta subunits. Mg(2+) is required as a cofactor.

It carries out the reaction succinate + ATP + CoA = succinyl-CoA + ADP + phosphate. The catalysed reaction is GTP + succinate + CoA = succinyl-CoA + GDP + phosphate. It participates in carbohydrate metabolism; tricarboxylic acid cycle; succinate from succinyl-CoA (ligase route): step 1/1. Succinyl-CoA synthetase functions in the citric acid cycle (TCA), coupling the hydrolysis of succinyl-CoA to the synthesis of either ATP or GTP and thus represents the only step of substrate-level phosphorylation in the TCA. The beta subunit provides nucleotide specificity of the enzyme and binds the substrate succinate, while the binding sites for coenzyme A and phosphate are found in the alpha subunit. In Bacillus pumilus (strain SAFR-032), this protein is Succinate--CoA ligase [ADP-forming] subunit beta.